The following is a 212-amino-acid chain: Probable chemoreceptor glutamine deamidase CheD (212 aa).

This sequence belongs to the CheD family.

The enzyme catalyses L-glutaminyl-[protein] + H2O = L-glutamyl-[protein] + NH4(+). Functionally, probably deamidates glutamine residues to glutamate on methyl-accepting chemotaxis receptors (MCPs), playing an important role in chemotaxis. This is Probable chemoreceptor glutamine deamidase CheD from Bordetella parapertussis (strain 12822 / ATCC BAA-587 / NCTC 13253).